Consider the following 133-residue polypeptide: ATP synthase epsilon chain, chloroplastic (133 aa).

It belongs to the ATPase epsilon chain family. As to quaternary structure, F-type ATPases have 2 components, CF(1) - the catalytic core - and CF(0) - the membrane proton channel. CF(1) has five subunits: alpha(3), beta(3), gamma(1), delta(1), epsilon(1). CF(0) has three main subunits: a, b and c.

Its subcellular location is the plastid. It localises to the chloroplast thylakoid membrane. Its function is as follows. Produces ATP from ADP in the presence of a proton gradient across the membrane. The sequence is that of ATP synthase epsilon chain, chloroplastic from Chara vulgaris (Common stonewort).